The following is a 423-amino-acid chain: CinA-like protein (423 aa).

The protein belongs to the CinA family.

The protein is CinA-like protein of Chlorobaculum tepidum (strain ATCC 49652 / DSM 12025 / NBRC 103806 / TLS) (Chlorobium tepidum).